The primary structure comprises 689 residues: MSEKTFLVEIGTEELPPKALRSLVESFAANFTVELDNAGLAHGTVQWFAAPRRLALKVANLAEAQPDREIEKRGPAIAQAFDAEGKPSKAAEGWARGCGITVDQAERLTTDKGEWLLYRAHVKGESTEALLPNMVATSLAKLPIPKLMRWGASDVHFVRPVHTVTLLLGDKVIPATILGIQSDRVIRGHRFMGEPEFTIDNADQYPEILRERGKVIADYEERKAKIKADAEEAARKIGGNADLSESLLEEVASLVEWPVVLTAKFEEKFLAVPAEALVYTMKGDQKYFPVYANDGKLLPNFIFVANIESKDPQQIISGNEKVVRPRLADAEFFFNTDRKKRLEDNLPRLQTVLFQQQLGTLRDKTDRIQALAGWIAEQIGADVNHATRAGLLSKCDLMTNMVFEFTDTQGVMGMHYACHDGEAEDVAVALNEQYQPRFAGDDLPSNPVACALAIADKMDTLAGIFGIGQHPKGDKDPFALRRAALGVLRIIVEKNLNLDLQTLTEEAVRLYGDKLTNANVVDDVIDFMLGRFRAWYQDEGYTVDTIQAVLARRPTRPADFDARMKAVSHFRTLDAAAALAAANKRVSNILAKSDEVLSDRVNASTLKEPEEIKLAMQVVVLRDKLEPYFAEGRYQDALVELAELREPVDAFFDKVMVMVDDKELRLNRLTMLEKLRELFLRVADISLLQ.

The protein belongs to the class-II aminoacyl-tRNA synthetase family. Tetramer of two alpha and two beta subunits.

The protein resides in the cytoplasm. It carries out the reaction tRNA(Gly) + glycine + ATP = glycyl-tRNA(Gly) + AMP + diphosphate. In Shigella boydii serotype 4 (strain Sb227), this protein is Glycine--tRNA ligase beta subunit.